The primary structure comprises 325 residues: Biotin synthase (325 aa).

The region spanning 36-254 is the Radical SAM core domain; sequence NEVQLAMLLS…IALARIMFPK (219 aa). 3 residues coordinate [4Fe-4S] cluster: Cys51, Cys55, and Cys58. The [2Fe-2S] cluster site is built by Cys95, Cys126, Cys186, and Arg258.

It belongs to the radical SAM superfamily. Biotin synthase family. Homodimer. Requires [4Fe-4S] cluster as cofactor. [2Fe-2S] cluster serves as cofactor.

It catalyses the reaction (4R,5S)-dethiobiotin + (sulfur carrier)-SH + 2 reduced [2Fe-2S]-[ferredoxin] + 2 S-adenosyl-L-methionine = (sulfur carrier)-H + biotin + 2 5'-deoxyadenosine + 2 L-methionine + 2 oxidized [2Fe-2S]-[ferredoxin]. Its pathway is cofactor biosynthesis; biotin biosynthesis; biotin from 7,8-diaminononanoate: step 2/2. Its function is as follows. Catalyzes the conversion of dethiobiotin (DTB) to biotin by the insertion of a sulfur atom into dethiobiotin via a radical-based mechanism. The chain is Biotin synthase from Neorickettsia sennetsu (strain ATCC VR-367 / Miyayama) (Ehrlichia sennetsu).